We begin with the raw amino-acid sequence, 550 residues long: Probable terpene synthase 2 (550 aa).

Mg(2+) contacts are provided by Asp-305, Asp-309, and Glu-457. A DDXXD motif motif is present at residues 305 to 309; sequence DDIYD.

This sequence belongs to the terpene synthase family. Mg(2+) is required as a cofactor.

In terms of biological role, probable sesquiterpene synthase. This chain is Probable terpene synthase 2 (TPS2), found in Ricinus communis (Castor bean).